The sequence spans 122 residues: Large ribosomal subunit protein uL14 (122 aa).

Belongs to the universal ribosomal protein uL14 family. Part of the 50S ribosomal subunit. Forms a cluster with proteins L3 and L19. In the 70S ribosome, L14 and L19 interact and together make contacts with the 16S rRNA in bridges B5 and B8.

Its function is as follows. Binds to 23S rRNA. Forms part of two intersubunit bridges in the 70S ribosome. The sequence is that of Large ribosomal subunit protein uL14 from Mycolicibacterium smegmatis (strain ATCC 700084 / mc(2)155) (Mycobacterium smegmatis).